The sequence spans 244 residues: 5-oxoprolinase subunit A (244 aa).

Belongs to the LamB/PxpA family. In terms of assembly, forms a complex composed of PxpA, PxpB and PxpC.

The enzyme catalyses 5-oxo-L-proline + ATP + 2 H2O = L-glutamate + ADP + phosphate + H(+). Functionally, catalyzes the cleavage of 5-oxoproline to form L-glutamate coupled to the hydrolysis of ATP to ADP and inorganic phosphate. This Salmonella paratyphi C (strain RKS4594) protein is 5-oxoprolinase subunit A.